The chain runs to 512 residues: Probable DNA ligase (512 aa).

Glu-208 is an ATP binding site. Lys-210 (N6-AMP-lysine intermediate) is an active-site residue. ATP is bound by residues Arg-215, Arg-230, Glu-259, Phe-299, Arg-374, and Lys-380.

Belongs to the ATP-dependent DNA ligase family. Mg(2+) serves as cofactor.

It carries out the reaction ATP + (deoxyribonucleotide)n-3'-hydroxyl + 5'-phospho-(deoxyribonucleotide)m = (deoxyribonucleotide)n+m + AMP + diphosphate.. DNA ligase that seals nicks in double-stranded DNA during DNA replication, DNA recombination and DNA repair. In Streptomyces coelicolor (strain ATCC BAA-471 / A3(2) / M145), this protein is Probable DNA ligase.